A 592-amino-acid chain; its full sequence is Aspartate--tRNA ligase (592 aa).

E177 is a binding site for L-aspartate. Residues 201-204 (QIFK) are aspartate. An L-aspartate-binding site is contributed by R223. ATP-binding positions include 223–225 (RDE) and Q232. H451 provides a ligand contact to L-aspartate. E485 serves as a coordination point for ATP. R492 is an L-aspartate binding site. An ATP-binding site is contributed by 537 to 540 (GLDR).

The protein belongs to the class-II aminoacyl-tRNA synthetase family. Type 1 subfamily. Homodimer.

It is found in the cytoplasm. It catalyses the reaction tRNA(Asp) + L-aspartate + ATP = L-aspartyl-tRNA(Asp) + AMP + diphosphate. In terms of biological role, catalyzes the attachment of L-aspartate to tRNA(Asp) in a two-step reaction: L-aspartate is first activated by ATP to form Asp-AMP and then transferred to the acceptor end of tRNA(Asp). The protein is Aspartate--tRNA ligase of Bacillus licheniformis (strain ATCC 14580 / DSM 13 / JCM 2505 / CCUG 7422 / NBRC 12200 / NCIMB 9375 / NCTC 10341 / NRRL NRS-1264 / Gibson 46).